The sequence spans 484 residues: Ectonucleoside triphosphate diphosphohydrolase 6 (484 aa).

Over 1-39 (MKKGIRYETSRKTSYIFQQPQHGPWQTRMRKISNHGSLR) the chain is Cytoplasmic. The helical; Signal-anchor for type II membrane protein transmembrane segment at 40–60 (VAKVAYPLGLCVGVFIYVAYI) threads the bilayer. The Lumenal segment spans residues 61 to 484 (KWHRATATQA…SLNRQKSPAS (424 aa)). Residue asparagine 220 is glycosylated (N-linked (GlcNAc...) asparagine). The active-site Proton acceptor is glutamate 224. An N-linked (GlcNAc...) asparagine glycan is attached at asparagine 284. Cystine bridges form between cysteine 325/cysteine 356 and cysteine 416/cysteine 430.

It belongs to the GDA1/CD39 NTPase family. Monomer. Requires Ca(2+) as cofactor. It depends on Mg(2+) as a cofactor. In terms of processing, the secreted form may be produced by intracellular processing. Post-translationally, N-glycosylated. In terms of tissue distribution, expressed in most tissues, but predominantly in heart.

It localises to the golgi apparatus membrane. The protein localises to the secreted. It is found in the cell membrane. It carries out the reaction a ribonucleoside 5'-diphosphate + H2O = a ribonucleoside 5'-phosphate + phosphate + H(+). It catalyses the reaction IDP + H2O = IMP + phosphate + H(+). The catalysed reaction is GDP + H2O = GMP + phosphate + H(+). The enzyme catalyses UDP + H2O = UMP + phosphate + H(+). Its activity is regulated as follows. Glycosylation does not appear to be required for enzymatic activity. Catalyzes the hydrolysis of nucleoside triphosphates and diphosphates in a calcium- or magnesium-dependent manner. Has a strong preference for nucleoside diphosphates, preferentially hydrolyzes GDP, IDP, and UDP, with slower hydrolysis of CDP, ITP, GTP, CTP, ADP, and UTP and virtually no hydrolysis of ATP. The membrane bound form might support glycosylation reactions in the Golgi apparatus and, when released from cells, might catalyze the hydrolysis of extracellular nucleotides. The chain is Ectonucleoside triphosphate diphosphohydrolase 6 (ENTPD6) from Homo sapiens (Human).